Consider the following 482-residue polypeptide: NADH-quinone oxidoreductase subunit D (482 aa).

Low complexity predominate over residues 1–16 (MTTNTSTSSTTDDLTT). Residues 1–48 (MTTNTSTSSTTDDLTTGAPNGTGAPDGANGVGGPTGTVGGPGEHPAYE) are disordered. Residues 29-42 (NGVGGPTGTVGGPG) show a composition bias toward gly residues.

This sequence belongs to the complex I 49 kDa subunit family. As to quaternary structure, NDH-1 is composed of 14 different subunits. Subunits NuoB, C, D, E, F, and G constitute the peripheral sector of the complex.

The protein localises to the cell membrane. The enzyme catalyses a quinone + NADH + 5 H(+)(in) = a quinol + NAD(+) + 4 H(+)(out). Functionally, NDH-1 shuttles electrons from NADH, via FMN and iron-sulfur (Fe-S) centers, to quinones in the respiratory chain. The immediate electron acceptor for the enzyme in this species is believed to be a menaquinone. Couples the redox reaction to proton translocation (for every two electrons transferred, four hydrogen ions are translocated across the cytoplasmic membrane), and thus conserves the redox energy in a proton gradient. The polypeptide is NADH-quinone oxidoreductase subunit D (Frankia casuarinae (strain DSM 45818 / CECT 9043 / HFP020203 / CcI3)).